The primary structure comprises 261 residues: MFEARLVQGSILKKVLEALKDLINEACWDISSSGVNLQSMDSSHVSLVQLTLRSEGFDTYRCDRNLAMGVNLTSMSKILKCAGNEDIITLRAEDNADTLALVFEAPNQEKVSDYEMKLMDLDVEQLGIPEQEYSCVVKMPSGEFARICRDLSHIGDAVVISCAKDGVKFSASGELGNGNIKLSQTSNVDKEEEAVTIEMNEPVQLTFALRYLNFFTKATPLSSTVTLSMSADVPLVVEYKIADMGHLKYYLAPKIEDEEGS.

An interaction with NUDT15 region spans residues 7–100 (VQGSILKKVL…RAEDNADTLA (94 aa)). K14, K77, and K80 each carry N6-acetyllysine. A DNA-binding region spans residues 61-80 (RCDRNLAMGVNLTSMSKILK). The cysteines at positions 135 and 162 are disulfide-linked. K164 is covalently cross-linked (Glycyl lysine isopeptide (Lys-Gly) (interchain with G-Cter in SUMO2); alternate). Residue K164 forms a Glycyl lysine isopeptide (Lys-Gly) (interchain with G-Cter in ubiquitin); alternate linkage. Y211 bears the Phosphotyrosine; by EGFR mark. K248 bears the N6-acetyllysine mark. K254 participates in a covalent cross-link: Glycyl lysine isopeptide (Lys-Gly) (interchain with G-Cter in SUMO2).

The protein belongs to the PCNA family. As to quaternary structure, homotrimer. Interacts with p300/EP300; the interaction occurs on chromatin in UV-irradiated damaged cells. Interacts with CREBBP (via transactivation domain and C-terminus); the interaction occurs on chromatin in UV-irradiated damaged cells. Directly interacts with POLD1, POLD3 and POLD4 subunits of the DNA polymerase delta complex, POLD3 being the major interacting partner; the interaction with POLD3 is inhibited by CDKN1A/p21(CIP1). Forms a complex with activator 1 heteropentamer in the presence of ATP. Interacts with EXO1, POLH, POLK, DNMT1, ERCC5, FEN1, CDC6 and POLDIP2. Interacts with POLB. Interacts with APEX2; this interaction is triggered by reactive oxygen species and increased by misincorporation of uracil in nuclear DNA. Forms a ternary complex with DNTTIP2 and core histone. Interacts with KCTD10 and PPP1R15A. Interacts with SMARCA5/SNF2H. Interacts with BAZ1B/WSTF; the interaction is direct and is required for BAZ1B/WSTF binding to replication foci during S phase. Interacts with HLTF and SHPRH. Interacts with NUDT15; this interaction is disrupted in response to UV irradiation and acetylation. Interacts with CDKN1A/p21(CIP1) and CDT1; interacts via their PIP-box which also recruits the DCX(DTL) complex. The interaction with CDKN1A inhibits POLD3 binding. Interacts with DDX11. Interacts with EGFR; positively regulates PCNA. Interacts with PARPBP. Interacts (when ubiquitinated) with SPRTN; leading to enhance RAD18-mediated PCNA ubiquitination. Interacts (when polyubiquitinated) with ZRANB3. Interacts with SMARCAD1. Interacts with CDKN1C. Interacts with PCLAF (via PIP-box). Interacts with RTEL1 (via PIP-box); the interaction is direct and essential for the suppression of telomere fragility. Interacts with FAM111A (via PIP-box); the interaction is direct and required for PCNA loading on chromatin binding. Interacts with LIG1. Interacts with SETMAR. Interacts with ANKRD17. Interacts with FBXO18/FBH1 (via PIP-box); the interaction recruits the DCX(DTL) complex and promotes ubiquitination and degradation of FBXO18/FBH1. Interacts with POLN. Interacts with SDE2 (via PIP-box); the interaction is direct and prevents ultraviolet light induced monoubiquitination. Component of the replisome complex composed of at least DONSON, MCM2, MCM7, PCNA and TICRR; interaction at least with PCNA occurs during DNA replication. Interacts with MAPK15; the interaction is chromatin binding dependent and prevents MDM2-mediated PCNA destruction by inhibiting the association of PCNA with MDM2. Interacts with PARP10 (via PIP-box). Interacts with DDI2. Interacts with HMCES (via PIP-box). Interacts with TRAIP (via PIP-box). Interacts with UHRF2. Interacts with ALKBH2; this interaction is enhanced during the S-phase of the cell cycle. Interacts with ATAD5; the interaction promotes USP1-mediated PCNA deubiquitination. Interacts with DNA damage up-regulated protein DDUP. Interacts (when phosphorylated) with GRB2. Interacts with ANG. Interacts with nuclear UNG (isoform 2); this interaction mediates UNG recruitment to S-phase replication foci. Interacts with ERCC6L2 (via an atypical PIP-box); this interaction facilitates cenrtomeric localization of ERCC6L2. (Microbial infection) Interacts with herpes virus 8 protein LANA1. Post-translationally, phosphorylated. Phosphorylation at Tyr-211 by EGFR stabilizes chromatin-associated PCNA. In terms of processing, acetylated by CREBBP and p300/EP300; preferentially acetylated by CREBBP on Lys-80, Lys-13 and Lys-14 and on Lys-77 by p300/EP300 upon loading on chromatin in response to UV irradiation. Lysine acetylation disrupts association with chromatin, hence promoting PCNA ubiquitination and proteasomal degradation in response to UV damage in a CREBBP- and EP300-dependent manner. Acetylation disrupts interaction with NUDT15 and promotes degradation. Ubiquitinated. Following DNA damage, can be either monoubiquitinated to stimulate direct bypass of DNA lesions by specialized DNA polymerases or polyubiquitinated to promote recombination-dependent DNA synthesis across DNA lesions by template switching mechanisms. Following induction of replication stress, monoubiquitinated by the UBE2B-RAD18 complex on Lys-164, leading to recruit translesion (TLS) polymerases, which are able to synthesize across DNA lesions in a potentially error-prone manner. An error-free pathway also exists and requires non-canonical polyubiquitination on Lys-164 through 'Lys-63' linkage of ubiquitin moieties by the E2 complex UBE2N-UBE2V2 and the E3 ligases, HLTF, RNF8 and SHPRH. This error-free pathway, also known as template switching, employs recombination mechanisms to synthesize across the lesion, using as a template the undamaged, newly synthesized strand of the sister chromatid. Monoubiquitination at Lys-164 also takes place in undamaged proliferating cells, and is mediated by the DCX(DTL) complex, leading to enhance PCNA-dependent translesion DNA synthesis. Sumoylated during S phase. Post-translationally, methylated on glutamate residues by ARMT1/C6orf211.

The protein resides in the nucleus. Functionally, auxiliary protein of DNA polymerase delta and epsilon, is involved in the control of eukaryotic DNA replication by increasing the polymerase's processibility during elongation of the leading strand. Induces a robust stimulatory effect on the 3'-5' exonuclease and 3'-phosphodiesterase, but not apurinic-apyrimidinic (AP) endonuclease, APEX2 activities. Has to be loaded onto DNA in order to be able to stimulate APEX2. Plays a key role in DNA damage response (DDR) by being conveniently positioned at the replication fork to coordinate DNA replication with DNA repair and DNA damage tolerance pathways. Acts as a loading platform to recruit DDR proteins that allow completion of DNA replication after DNA damage and promote postreplication repair: Monoubiquitinated PCNA leads to recruitment of translesion (TLS) polymerases, while 'Lys-63'-linked polyubiquitination of PCNA is involved in error-free pathway and employs recombination mechanisms to synthesize across the lesion. In Homo sapiens (Human), this protein is Proliferating cell nuclear antigen (PCNA).